The primary structure comprises 155 residues: Small ribosomal subunit protein uS7cz/uS7cy (155 aa).

Belongs to the universal ribosomal protein uS7 family. As to quaternary structure, part of the 30S ribosomal subunit.

The protein localises to the plastid. Its subcellular location is the chloroplast. Its function is as follows. One of the primary rRNA binding proteins, it binds directly to 16S rRNA where it nucleates assembly of the head domain of the 30S subunit. In Oenothera argillicola (Appalachian evening primrose), this protein is Small ribosomal subunit protein uS7cz/uS7cy (rps7-A).